A 154-amino-acid polypeptide reads, in one-letter code: 6,7-dimethyl-8-ribityllumazine synthase (154 aa).

5-amino-6-(D-ribitylamino)uracil-binding positions include phenylalanine 23, 57 to 59 (AFE), and 81 to 83 (AVI). Residue 86-87 (ST) participates in (2S)-2-hydroxy-3-oxobutyl phosphate binding. The Proton donor role is filled by histidine 89. Residue phenylalanine 114 coordinates 5-amino-6-(D-ribitylamino)uracil. Arginine 128 provides a ligand contact to (2S)-2-hydroxy-3-oxobutyl phosphate.

The protein belongs to the DMRL synthase family.

It carries out the reaction (2S)-2-hydroxy-3-oxobutyl phosphate + 5-amino-6-(D-ribitylamino)uracil = 6,7-dimethyl-8-(1-D-ribityl)lumazine + phosphate + 2 H2O + H(+). Its pathway is cofactor biosynthesis; riboflavin biosynthesis; riboflavin from 2-hydroxy-3-oxobutyl phosphate and 5-amino-6-(D-ribitylamino)uracil: step 1/2. Catalyzes the formation of 6,7-dimethyl-8-ribityllumazine by condensation of 5-amino-6-(D-ribitylamino)uracil with 3,4-dihydroxy-2-butanone 4-phosphate. This is the penultimate step in the biosynthesis of riboflavin. The sequence is that of 6,7-dimethyl-8-ribityllumazine synthase from Campylobacter jejuni subsp. doylei (strain ATCC BAA-1458 / RM4099 / 269.97).